The primary structure comprises 205 residues: Small ribosomal subunit protein uS4B (205 aa).

The S4 RNA-binding domain maps to 94–157; that stretch reads RRLDNVVFRA…LNLPIVLGTL (64 aa).

This sequence belongs to the universal ribosomal protein uS4 family. As to quaternary structure, part of the 30S ribosomal subunit. Contacts protein S5. The interaction surface between S4 and S5 is involved in control of translational fidelity.

Functionally, one of the primary rRNA binding proteins, it binds directly to 16S rRNA where it nucleates assembly of the body of the 30S subunit. Its function is as follows. With S5 and S12 plays an important role in translational accuracy. The chain is Small ribosomal subunit protein uS4B from Nitrosomonas europaea (strain ATCC 19718 / CIP 103999 / KCTC 2705 / NBRC 14298).